A 175-amino-acid polypeptide reads, in one-letter code: Large ribosomal subunit protein uL10 (175 aa).

Belongs to the universal ribosomal protein uL10 family. In terms of assembly, part of the ribosomal stalk of the 50S ribosomal subunit. The N-terminus interacts with L11 and the large rRNA to form the base of the stalk. The C-terminus forms an elongated spine to which L12 dimers bind in a sequential fashion forming a multimeric L10(L12)X complex.

Forms part of the ribosomal stalk, playing a central role in the interaction of the ribosome with GTP-bound translation factors. The chain is Large ribosomal subunit protein uL10 from Psychrobacter cryohalolentis (strain ATCC BAA-1226 / DSM 17306 / VKM B-2378 / K5).